Here is a 278-residue protein sequence, read N- to C-terminus: Orotidine 5'-phosphate decarboxylase (278 aa).

Lys96 functions as the Proton donor in the catalytic mechanism.

Belongs to the OMP decarboxylase family. Type 2 subfamily.

The enzyme catalyses orotidine 5'-phosphate + H(+) = UMP + CO2. It participates in pyrimidine metabolism; UMP biosynthesis via de novo pathway; UMP from orotate: step 2/2. This is Orotidine 5'-phosphate decarboxylase from Salinispora arenicola (strain CNS-205).